Here is a 445-residue protein sequence, read N- to C-terminus: UDP-N-acetylmuramate--L-alanine ligase (445 aa).

113-119 (GSHGKTS) contacts ATP.

The protein belongs to the MurCDEF family.

It is found in the cytoplasm. It catalyses the reaction UDP-N-acetyl-alpha-D-muramate + L-alanine + ATP = UDP-N-acetyl-alpha-D-muramoyl-L-alanine + ADP + phosphate + H(+). The protein operates within cell wall biogenesis; peptidoglycan biosynthesis. In terms of biological role, cell wall formation. This is UDP-N-acetylmuramate--L-alanine ligase from Enterococcus faecalis (strain ATCC 700802 / V583).